Here is a 294-residue protein sequence, read N- to C-terminus: Ribosomal RNA small subunit methyltransferase A (294 aa).

Residues Asn-29, Val-31, Gly-56, Glu-77, Asp-107, and Asn-126 each coordinate S-adenosyl-L-methionine.

Belongs to the class I-like SAM-binding methyltransferase superfamily. rRNA adenine N(6)-methyltransferase family. RsmA subfamily.

It localises to the cytoplasm. The enzyme catalyses adenosine(1518)/adenosine(1519) in 16S rRNA + 4 S-adenosyl-L-methionine = N(6)-dimethyladenosine(1518)/N(6)-dimethyladenosine(1519) in 16S rRNA + 4 S-adenosyl-L-homocysteine + 4 H(+). Its function is as follows. Specifically dimethylates two adjacent adenosines (A1518 and A1519) in the loop of a conserved hairpin near the 3'-end of 16S rRNA in the 30S particle. May play a critical role in biogenesis of 30S subunits. The polypeptide is Ribosomal RNA small subunit methyltransferase A (Mycobacterium sp. (strain JLS)).